The chain runs to 911 residues: Inositol 1,4,5-triphosphate receptor associated 1 (911 aa).

Over residues 1–11 the composition is skewed to basic and acidic residues; it reads MVKAPQSEERL. 4 disordered regions span residues 1-21, 39-122, 174-405, and 478-498; these read MVKA…NNSV, EVPG…HRHL, LTRR…GPRL, and EQEK…ESKG. The span at 68-86 shows a compositional bias: polar residues; the sequence is AAQSPAGQDPATTGISCSP. The segment covering 111–122 has biased composition (basic residues); that stretch reads HSPHRRLSHRHL. S118 bears the Phosphoserine mark. The tract at residues 152–184 is interaction with PRKG1; sequence SEEDKKKNLALLEEAKLVSERFLTRRGRKSRSS. Residues 183–212 show a composition bias toward polar residues; that stretch reads SSPGESSPAVSPNLSPGASPASSQSNSLTV. Residues 277–292 show a composition bias toward basic and acidic residues; that stretch reads TVEKSKEITIEQKENF. Position 393 is a phosphoserine (S393). An interaction with ITPR1 region spans residues 534–580; sequence NVFVQLSLAFRNDSYTLESRINQAERERNLTEENTEKELENFKASIT. A coiled-coil region spans residues 547–645; sequence SYTLESRINQ…MQYVENLKRT (99 aa). A phosphoserine mark is found at S683 and S696. Disordered regions lie at residues 706–766 and 787–829; these read LNLP…TPSC and YQEG…KEQR. Residues 708–728 show a composition bias toward low complexity; sequence LPGQSPSSSPIPSLPALSESS. A compositionally biased stretch (basic and acidic residues) spans 790 to 801; it reads GLKKTKELQGLR. The span at 802–825 shows a compositional bias: acidic residues; sequence EEEEEQKSESPEEPEEVAETEEEE. Residues 853 to 873 traverse the membrane as a helical segment; the sequence is VIWMMAAAMLVLTVVLGLYGS.

Interacts with PRKG1/cGKI-beta and ITPR1/IP3R type I. Part of cGMP kinase signaling complex at least composed of ACTA2/alpha-actin, CNN1/calponin H1, PLN/phospholamban, PRKG1 and ITPR1. Interacts with HCN4; regulates HCN4 channel activity. Phosphorylated by PRKG1/cGKI-beta. Phosphorylation at Ser-696 is necessary for PRKG1-induced calcium release in the cytosol. Highly expressed in trachea, aorta and uterus.

The protein resides in the sarcoplasmic reticulum. The protein localises to the cytoplasm. It is found in the perinuclear region. Its subcellular location is the membrane. Functionally, plays a role as NO/PRKG1-dependent regulator of IP3-induced calcium release; its phosphorylation by PRKG1 inhibits bradykinin and IP3-induced calcium release from intracellular stores. Recruits PRKG1 to the endoplasmic reticulum and may mediate the assembly of PRKG1 and ITPR1 in a macrocomplex. Involved in PRKG1 signaling cascade leading to inhibition of platelet activation and aggregation. Also mediates NO-dependent inhibition of calcium signaling in gastrointestinal smooth muscle contributing to NO-dependent relaxation. Plays a role in the regulation of cellular excitability by regulating the hyperpolarization-activated cyclic nucleotide-gated HCN4 channel activity. The polypeptide is Inositol 1,4,5-triphosphate receptor associated 1 (IRAG1) (Bos taurus (Bovine)).